Here is a 189-residue protein sequence, read N- to C-terminus: Peptidyl-tRNA hydrolase (189 aa).

Tyr14 serves as a coordination point for tRNA. Residue His19 is the Proton acceptor of the active site. Residues Tyr64, Asn66, and Asn112 each coordinate tRNA.

Belongs to the PTH family. As to quaternary structure, monomer.

Its subcellular location is the cytoplasm. The enzyme catalyses an N-acyl-L-alpha-aminoacyl-tRNA + H2O = an N-acyl-L-amino acid + a tRNA + H(+). Hydrolyzes ribosome-free peptidyl-tRNAs (with 1 or more amino acids incorporated), which drop off the ribosome during protein synthesis, or as a result of ribosome stalling. Functionally, catalyzes the release of premature peptidyl moieties from peptidyl-tRNA molecules trapped in stalled 50S ribosomal subunits, and thus maintains levels of free tRNAs and 50S ribosomes. The polypeptide is Peptidyl-tRNA hydrolase (Clostridium botulinum (strain Loch Maree / Type A3)).